The sequence spans 140 residues: MQHRGFFLLALLALLVVTSAVAKKKEKVKKGSECSEWTWGPCTPSSKDCGMGFREGTCGAQTQRVHCKVPCNWKKEFGADCKYKFESWGACDGSTGTKARQGTLKKARYNAQCQETIRVTKPCTSKTKSKTKAKKGKGKD.

Residues 1–22 (MQHRGFFLLALLALLVVTSAVA) form the signal peptide. Disulfide bonds link Cys-34-Cys-58, Cys-42-Cys-67, Cys-49-Cys-71, Cys-81-Cys-113, and Cys-91-Cys-123.

This sequence belongs to the pleiotrophin family. In terms of assembly, homodimer. Interacts with ALK. Interacts with LRP1; promotes neuronal survival. Interacts with LRP2. Interacts with NCAM1. Interacts (via C-terminal) with PTPRZ1 (via chondroitin sulfate chains); this interaction is inhibited by PTN; this interaction promotes neuronal migration. Interacts with NCL; this interaction promotes NCL clustering and lateral movements of this complex into lipid rafts leading to MDK internalization. Interacts with LRP6 and LRP8: this interaction is calcium dependent. Interacts with ITGA4. Interacts with ITGA6. Interacts with ITGB1. Interacts with ITGA4:ITGB1 complex; this interaction mediates MDK-induced osteoblast cells migration through PXN phosphorylation. Interacts with ITGA6:ITGB1 complex; this interaction mediates MDK-induced neurite outgrowth. Interacts with NOTCH2; this interactio mediates a nuclear accumulation of NOTCH2 and therefore activation of NOTCH2 signaling leading to interaction between HES1 and STAT3. Interacts with GPC2 (via heparan sulfate chain); this interaction is inhibited by heparin followed by chondroitin sulfate E; this interaction induces GPC2 clustering through heparan sulfate chain; this interaction induces neuronal cell adhesion and neurite outgrowth. Interacts with SDC3; this interaction induces SDC3 clustering; this interaction induces neuronal cell adhesion and neurite outgrowth. Interacts with SDC1. Interacts with CSPG5; this interaction promotes elongation of oligodendroglial precursor-like cells. In terms of tissue distribution, expressed in the follicular epithelium and granulosa cells of the ovary.

The protein resides in the secreted. In terms of biological role, secreted protein that functions as a cytokine and growth factor and mediates its signal through cell-surface proteoglycan and non-proteoglycan receptors. Binds cell-surface proteoglycan receptors via their chondroitin sulfate (CS) groups. Thereby regulates many processes like inflammatory response, cell proliferation, cell adhesion, cell growth, cell survival, tissue regeneration, cell differentiation and cell migration. Participates in inflammatory processes by exerting two different activities. Firstly, mediates neutrophils and macrophages recruitment to the sites of inflammation both by direct action by cooperating namely with ITGB2 via LRP1 and by inducing chemokine expression. This inflammation can be accompanied by epithelial cell survival and smooth muscle cell migration after renal and vessel damage, respectively. Secondly, suppresses the development of tolerogenic dendric cells thereby inhibiting the differentiation of regulatory T cells and also promote T cell expansion through NFAT signaling and Th1 cell differentiation. Promotes tissue regeneration after injury or trauma. After heart damage negatively regulates the recruitment of inflammatory cells and mediates cell survival through activation of anti-apoptotic signaling pathways via MAPKs and AKT pathways through the activation of angiogenesis. Also facilitates liver regeneration as well as bone repair by recruiting macrophage at trauma site and by promoting cartilage development by facilitating chondrocyte differentiation. Plays a role in brain by promoting neural precursor cells survival and growth through interaction with heparan sulfate proteoglycans. Binds PTPRZ1 and promotes neuronal migration and embryonic neurons survival. Binds SDC3 or GPC2 and mediates neurite outgrowth and cell adhesion. Binds chondroitin sulfate E and heparin leading to inhibition of neuronal cell adhesion induced by binding with GPC2. Binds CSPG5 and promotes elongation of oligodendroglial precursor-like cells. Also binds ITGA6:ITGB1 complex; this interaction mediates MDK-induced neurite outgrowth. Binds LRP1; promotes neuronal survival. Binds ITGA4:ITGB1 complex; this interaction mediates MDK-induced osteoblast cells migration through PXN phosphorylation. Binds anaplastic lymphoma kinase (ALK) which induces ALK activation and subsequent phosphorylation of the insulin receptor substrate (IRS1), followed by the activation of mitogen-activated protein kinase (MAPK) and PI3-kinase, and the induction of cell proliferation. Promotes epithelial to mesenchymal transition through interaction with NOTCH2. During arteriogenesis, plays a role in vascular endothelial cell proliferation by inducing VEGFA expression and release which in turn induces nitric oxide synthase expression. Moreover activates vasodilation through nitric oxide synthase activation. Negatively regulates bone formation in response to mechanical load by inhibiting Wnt/beta-catenin signaling in osteoblasts. In addition plays a role in hippocampal development, working memory, auditory response, early fetal adrenal gland development and the female reproductive system. The polypeptide is Midkine (Mus musculus (Mouse)).